Reading from the N-terminus, the 509-residue chain is MQSWSRVYCSLAKKGHFNRLSHGLQGASSVPLRTYSDQPIDADVTVIGSGPGGYVAAIKAAQLGFKTVCIEKNETLGGTCLNVGCIPSKALLNNSHYYHLAHGKDFASRGIEIPEVRLNLEKMMEQKRSAVKALTGGIAHLFKQNKVVHVNGFGKITGKNQVTATTADGSTQVIGTKNILIATGSEVTPFPGITIDEDTIVSSTGALSLKKVPEKLVVIGAGVIGVELGSVWQRLGADVTAVEFLGHVGGIGIDMEISKNFQRILQKQGFKFKLNTKVTGATKKSDGKIDVSVEAASGGKAEVITCDVLLVCIGRRPFTQNLGLEELGIELDPKGRIPVNTRFQTKIPNIFAIGDVVAGPMLAHKAEDEGIICVEGMAGGAVHIDYNCVPSVIYTHPEVAWVGKSEEQLKEEGVEFKVGKFPFAANSRAKTNADTDGMVKILGHKSTDRILGAHILGPGAGEMVNEAALALEYGASCEDVARVCHAHPTLSEAFREANLAASFGKPINF.

Residues 1–35 constitute a mitochondrion transit peptide; the sequence is MQSWSRVYCSLAKKGHFNRLSHGLQGASSVPLRTY. An N6-acetyllysine; alternate modification is found at Lys-66. At Lys-66 the chain carries N6-succinyllysine; alternate. FAD contacts are provided by residues 71-80 and Lys-89; that span reads EKNETLGGTC. Cys-80 and Cys-85 form a disulfide bridge. 4 positions are modified to N6-acetyllysine; alternate: Lys-104, Lys-122, Lys-132, and Lys-143. An N6-succinyllysine; alternate mark is found at Lys-104, Lys-122, Lys-132, and Lys-143. Residue Gly-154 participates in FAD binding. Lys-159 carries the N6-succinyllysine modification. Residue 183–185 coordinates FAD; it reads TGS. NAD(+)-binding positions include 220–227 and Glu-243; that span reads GAGVIGVE. N6-succinyllysine occurs at positions 273 and 277. Val-278 is an NAD(+) binding site. Residues Ser-285 and Ser-297 each carry the phosphoserine modification. An NAD(+)-binding site is contributed by Gly-314. At Lys-346 the chain carries N6-acetyllysine. FAD is bound by residues Asp-355 and 361–364; that span reads MLAH. Lys-410 carries the post-translational modification N6-acetyllysine; alternate. Lys-410 bears the N6-succinyllysine; alternate mark. N6-acetyllysine is present on residues Lys-417 and Lys-420. The residue at position 430 (Lys-430) is an N6-succinyllysine. Residue His-487 is the Proton acceptor of the active site. Position 502 is a phosphoserine (Ser-502). Lys-505 is modified (N6-acetyllysine; alternate). Lys-505 is modified (N6-succinyllysine; alternate).

The protein belongs to the class-I pyridine nucleotide-disulfide oxidoreductase family. As to quaternary structure, homodimer. Part of the multimeric pyruvate dehydrogenase complex that contains multiple copies of pyruvate dehydrogenase (subunits PDHA (PDHA1 or PDHA2) and PDHB, E1), dihydrolipoamide acetyltransferase (DLAT, E2) and lipoamide dehydrogenase (DLD, E3). These subunits are bound to an inner core composed of about 48 DLAT and 12 PDHX molecules (by non covalent bonds). The 2-oxoglutarate dehydrogenase complex is composed of OGDH (2-oxoglutarate dehydrogenase; E1), DLST (dihydrolipoamide succinyltransferase; E2), DLD (dihydrolipoamide dehydrogenase; E3) and the assembly factor KGD4. It contains multiple copies of the three enzymatic components (E1, E2 and E3). In the nucleus, the 2-oxoglutarate dehydrogenase complex associates with KAT2A. Interacts with PDHX. FAD is required as a cofactor. Post-translationally, tyrosine phosphorylated.

Its subcellular location is the mitochondrion matrix. It localises to the nucleus. The protein localises to the cell projection. The protein resides in the cilium. It is found in the flagellum. Its subcellular location is the cytoplasmic vesicle. It localises to the secretory vesicle. The protein localises to the acrosome. It catalyses the reaction N(6)-[(R)-dihydrolipoyl]-L-lysyl-[protein] + NAD(+) = N(6)-[(R)-lipoyl]-L-lysyl-[protein] + NADH + H(+). Its function is as follows. Lipoamide dehydrogenase is a component of the glycine cleavage system as well as an E3 component of three alpha-ketoacid dehydrogenase complexes (pyruvate-, alpha-ketoglutarate-, and branched-chain amino acid-dehydrogenase complex). The 2-oxoglutarate dehydrogenase complex is mainly active in the mitochondrion. A fraction of the 2-oxoglutarate dehydrogenase complex also localizes in the nucleus and is required for lysine succinylation of histones: associates with KAT2A on chromatin and provides succinyl-CoA to histone succinyltransferase KAT2A. In monomeric form may have additional moonlighting function as serine protease. Involved in the hyperactivation of spermatazoa during capacitation and in the spermatazoal acrosome reaction. The chain is Dihydrolipoyl dehydrogenase, mitochondrial (Dld) from Rattus norvegicus (Rat).